The following is a 131-amino-acid chain: Large ribosomal subunit protein bL17 (131 aa).

Belongs to the bacterial ribosomal protein bL17 family. Part of the 50S ribosomal subunit. Contacts protein L32.

In Chromobacterium violaceum (strain ATCC 12472 / DSM 30191 / JCM 1249 / CCUG 213 / NBRC 12614 / NCIMB 9131 / NCTC 9757 / MK), this protein is Large ribosomal subunit protein bL17.